A 205-amino-acid polypeptide reads, in one-letter code: MNEQLHNRTMAFAGILQAIAQVQHLARHGESDTDELAASLNTILVTDPESAADVYQDKAALHKGYQLVLNQLGDSSQKDVEITRYLVGILALERKLTRSNSGLAMLAERINQVNRQLHHFAITDEQVIANLASIYSDIISNLGPKIQISGNPLCLQRPLVQHKIRALLLAAMRSAVLWRQLGGKRRHLVFARKAIIDTAKKSLTL.

It belongs to the HflD family.

The protein resides in the cytoplasm. The protein localises to the cell inner membrane. This is High frequency lysogenization protein HflD homolog from Shewanella sp. (strain ANA-3).